Reading from the N-terminus, the 263-residue chain is Small ribosomal subunit protein eS4 (263 aa).

One can recognise an S4 RNA-binding domain in the interval 42-104; sequence LPLIIFLRNR…TGENFRLIYD (63 aa).

This sequence belongs to the eukaryotic ribosomal protein eS4 family.

The polypeptide is Small ribosomal subunit protein eS4 (RPS4) (Cricetulus griseus (Chinese hamster)).